Here is a 357-residue protein sequence, read N- to C-terminus: Methylthioribose-1-phosphate isomerase (357 aa).

Substrate-binding positions include 49-51 (RGA), arginine 89, and glutamine 197. Aspartate 238 (proton donor) is an active-site residue. Position 248–249 (248–249 (NK)) interacts with substrate.

This sequence belongs to the eIF-2B alpha/beta/delta subunits family. MtnA subfamily.

The catalysed reaction is 5-(methylsulfanyl)-alpha-D-ribose 1-phosphate = 5-(methylsulfanyl)-D-ribulose 1-phosphate. Its pathway is amino-acid biosynthesis; L-methionine biosynthesis via salvage pathway; L-methionine from S-methyl-5-thio-alpha-D-ribose 1-phosphate: step 1/6. In terms of biological role, catalyzes the interconversion of methylthioribose-1-phosphate (MTR-1-P) into methylthioribulose-1-phosphate (MTRu-1-P). This Leptospira biflexa serovar Patoc (strain Patoc 1 / Ames) protein is Methylthioribose-1-phosphate isomerase.